The primary structure comprises 265 residues: 2-C-methyl-D-erythritol 4-phosphate cytidylyltransferase (265 aa).

Residues 231 to 241 (DRGGASREAER) are compositionally biased toward basic and acidic residues. The tract at residues 231–265 (DRGGASREAERSAMPSAATSVFSGARSAASGSEEV) is disordered. A compositionally biased stretch (low complexity) spans 253–265 (SGARSAASGSEEV).

This sequence belongs to the IspD/TarI cytidylyltransferase family. IspD subfamily.

It catalyses the reaction 2-C-methyl-D-erythritol 4-phosphate + CTP + H(+) = 4-CDP-2-C-methyl-D-erythritol + diphosphate. The protein operates within isoprenoid biosynthesis; isopentenyl diphosphate biosynthesis via DXP pathway; isopentenyl diphosphate from 1-deoxy-D-xylulose 5-phosphate: step 2/6. In terms of biological role, catalyzes the formation of 4-diphosphocytidyl-2-C-methyl-D-erythritol from CTP and 2-C-methyl-D-erythritol 4-phosphate (MEP). The chain is 2-C-methyl-D-erythritol 4-phosphate cytidylyltransferase from Xanthomonas campestris pv. campestris (strain 8004).